A 247-amino-acid polypeptide reads, in one-letter code: 23S rRNA (guanosine-2'-O-)-methyltransferase RlmB (247 aa).

3 residues coordinate S-adenosyl-L-methionine: glycine 197, isoleucine 217, and leucine 226.

Belongs to the class IV-like SAM-binding methyltransferase superfamily. RNA methyltransferase TrmH family. RlmB subfamily.

The protein resides in the cytoplasm. It carries out the reaction guanosine(2251) in 23S rRNA + S-adenosyl-L-methionine = 2'-O-methylguanosine(2251) in 23S rRNA + S-adenosyl-L-homocysteine + H(+). In terms of biological role, specifically methylates the ribose of guanosine 2251 in 23S rRNA. This Burkholderia sp protein is 23S rRNA (guanosine-2'-O-)-methyltransferase RlmB.